The chain runs to 82 residues: QKPGEAVILEQSIDNDGLGQYTFGFKTSDGLIRQEQGVVKNQGTENEALEVRGTITWLGADGKDYSINFVADENGFQPQYTQ.

Q1 carries the post-translational modification Pyrrolidone carboxylic acid. Residues 18-82 (LGQYTFGFKT…ENGFQPQYTQ (65 aa)) enclose the Chitin-binding type R&amp;R domain.

Component of the abdominal endocuticle. The polypeptide is Endocuticle structural protein SgAbd-6 (Schistocerca gregaria (Desert locust)).